Consider the following 461-residue polypeptide: Argininosuccinate lyase (461 aa).

Belongs to the lyase 1 family. Argininosuccinate lyase subfamily.

The protein localises to the cytoplasm. The enzyme catalyses 2-(N(omega)-L-arginino)succinate = fumarate + L-arginine. It participates in amino-acid biosynthesis; L-arginine biosynthesis; L-arginine from L-ornithine and carbamoyl phosphate: step 3/3. The polypeptide is Argininosuccinate lyase (Dehalococcoides mccartyi (strain ATCC BAA-2100 / JCM 16839 / KCTC 5957 / BAV1)).